The sequence spans 482 residues: tRNA sulfurtransferase (482 aa).

Residues 61-165 (LAIRDALTRI…DDRLLLIKGR (105 aa)) enclose the THUMP domain. ATP contacts are provided by residues 183–184 (LI), lysine 265, glycine 287, and glutamine 296. Cysteine 344 and cysteine 456 form a disulfide bridge. Residues 404–482 (FGPNDVILDI…GFNNVKVYRP (79 aa)) form the Rhodanese domain. The active-site Cysteine persulfide intermediate is the cysteine 456.

The protein belongs to the ThiI family.

The protein localises to the cytoplasm. It catalyses the reaction [ThiI sulfur-carrier protein]-S-sulfanyl-L-cysteine + a uridine in tRNA + 2 reduced [2Fe-2S]-[ferredoxin] + ATP + H(+) = [ThiI sulfur-carrier protein]-L-cysteine + a 4-thiouridine in tRNA + 2 oxidized [2Fe-2S]-[ferredoxin] + AMP + diphosphate. The enzyme catalyses [ThiS sulfur-carrier protein]-C-terminal Gly-Gly-AMP + S-sulfanyl-L-cysteinyl-[cysteine desulfurase] + AH2 = [ThiS sulfur-carrier protein]-C-terminal-Gly-aminoethanethioate + L-cysteinyl-[cysteine desulfurase] + A + AMP + 2 H(+). It participates in cofactor biosynthesis; thiamine diphosphate biosynthesis. Functionally, catalyzes the ATP-dependent transfer of a sulfur to tRNA to produce 4-thiouridine in position 8 of tRNAs, which functions as a near-UV photosensor. Also catalyzes the transfer of sulfur to the sulfur carrier protein ThiS, forming ThiS-thiocarboxylate. This is a step in the synthesis of thiazole, in the thiamine biosynthesis pathway. The sulfur is donated as persulfide by IscS. The protein is tRNA sulfurtransferase of Shigella boydii serotype 4 (strain Sb227).